We begin with the raw amino-acid sequence, 35 residues long: Thionin NsW2 (35 aa).

Cystine bridges form between C4–C32, C12–C30, and C16–C26.

In terms of processing, contains 4 disulfide bonds.

The protein resides in the secreted. Its function is as follows. Antimicrobial peptide disrupting membranes. Has antibacterial against Gram-positive bacteria S.aureus (MIC=6.5 uM) and B.subtilis (MIC=3.25 uM) but not against Gram-negative bacterium E.coli. Has antifungal activity against C.albicans (MIC=3.25 uM). The protein is Thionin NsW2 of Nigella sativa (Black cumin).